A 206-amino-acid polypeptide reads, in one-letter code: Adenylyl-sulfate kinase (206 aa).

Residue 36-43 (GLSGSGKS) coordinates ATP. Ser-110 functions as the Phosphoserine intermediate in the catalytic mechanism.

This sequence belongs to the APS kinase family.

It catalyses the reaction adenosine 5'-phosphosulfate + ATP = 3'-phosphoadenylyl sulfate + ADP + H(+). It participates in sulfur metabolism; hydrogen sulfide biosynthesis; sulfite from sulfate: step 2/3. In terms of biological role, catalyzes the synthesis of activated sulfate. In Buchnera aphidicola subsp. Acyrthosiphon pisum (strain APS) (Acyrthosiphon pisum symbiotic bacterium), this protein is Adenylyl-sulfate kinase (cysC).